The sequence spans 277 residues: Large ribosomal subunit protein uL2 (277 aa).

Residues 222–277 (GSVMNPNDHPHGGGEGKAPVGRKAPSTPWGKPALGLKTRNKKAKSDKLIVRRRNEK) form a disordered region. The segment covering 264 to 277 (AKSDKLIVRRRNEK) has biased composition (basic and acidic residues).

This sequence belongs to the universal ribosomal protein uL2 family. In terms of assembly, part of the 50S ribosomal subunit. Forms a bridge to the 30S subunit in the 70S ribosome.

In terms of biological role, one of the primary rRNA binding proteins. Required for association of the 30S and 50S subunits to form the 70S ribosome, for tRNA binding and peptide bond formation. It has been suggested to have peptidyltransferase activity; this is somewhat controversial. Makes several contacts with the 16S rRNA in the 70S ribosome. The protein is Large ribosomal subunit protein uL2 of Streptococcus thermophilus (strain CNRZ 1066).